The primary structure comprises 381 residues: uncharacterized protein (381 aa).

Belongs to the glycerate kinase type-1 family.

This is an uncharacterized protein from Mycobacterium tuberculosis (strain CDC 1551 / Oshkosh).